Reading from the N-terminus, the 403-residue chain is MSQCTVEYNVSEITEYVLSTLGERCQSAGIVIPTVIIYGTIFLLGLFGNICTCIVIAANKSMHNPTNYYLFSLAVSDIIALILGLPMEFYQSLDYSYPYRFSEGICKARAFLIEFTSYASIMIICCFSFERWLAICHPLRSKIFSTLWRANVLIILAWTISFVCALPIAFIVQINKLPLPEDAKYQPWTNKVSTDGIFVLHTEFCAMNQSRPDQQKMIIIFAFTVFFVIPAIAIVIMYAHIAVQLESSEIDLKGDKMVKKRRNKSNRTVLKMLLSVVITFFICWLPFHIQRLLSVYTTWSETTTISPPVQFLSMIVFYISGFCYYSNSAANPILYNILSQKYRSAFCRTILGDHIANFVFKGHQRPGQSKRCSSSTEAEQRTLMTRGSVRVDKPHRKLEVHNY.

At 1 to 27 (MSQCTVEYNVSEITEYVLSTLGERCQS) the chain is on the extracellular side. A helical membrane pass occupies residues 28 to 48 (AGIVIPTVIIYGTIFLLGLFG). Residues 49–68 (NICTCIVIAANKSMHNPTNY) lie on the Cytoplasmic side of the membrane. The helical transmembrane segment at 69–89 (YLFSLAVSDIIALILGLPMEF) threads the bilayer. Topologically, residues 90–109 (YQSLDYSYPYRFSEGICKAR) are extracellular. The chain crosses the membrane as a helical span at residues 110–130 (AFLIEFTSYASIMIICCFSFE). The Cytoplasmic segment spans residues 131–151 (RWLAICHPLRSKIFSTLWRAN). The helical transmembrane segment at 152-172 (VLIILAWTISFVCALPIAFIV) threads the bilayer. The Extracellular portion of the chain corresponds to 173–216 (QINKLPLPEDAKYQPWTNKVSTDGIFVLHTEFCAMNQSRPDQQK). Residues 217–237 (MIIIFAFTVFFVIPAIAIVIM) form a helical membrane-spanning segment. Topologically, residues 238-268 (YAHIAVQLESSEIDLKGDKMVKKRRNKSNRT) are cytoplasmic. A helical transmembrane segment spans residues 269 to 289 (VLKMLLSVVITFFICWLPFHI). Topologically, residues 290–304 (QRLLSVYTTWSETTT) are extracellular. The chain crosses the membrane as a helical span at residues 305-325 (ISPPVQFLSMIVFYISGFCYY). Topologically, residues 326–403 (SNSAANPILY…PHRKLEVHNY (78 aa)) are cytoplasmic.

This sequence belongs to the G-protein coupled receptor 1 family.

Its subcellular location is the membrane. Functionally, putative G protein-coupled receptor for pyrokinin-like neuropeptide derived from the processing of the neuropeptide precursor capa-1. In Caenorhabditis elegans, this protein is Neuromedin U receptor homolog nmur-2.